A 439-amino-acid chain; its full sequence is Xylose isomerase (439 aa).

Catalysis depends on residues His101 and Asp104. Residues Glu232, Glu268, His271, Asp296, Asp307, Asp309, and Asp339 each contribute to the Mg(2+) site.

This sequence belongs to the xylose isomerase family. As to quaternary structure, homotetramer. Mg(2+) is required as a cofactor.

It is found in the cytoplasm. It carries out the reaction alpha-D-xylose = alpha-D-xylulofuranose. The sequence is that of Xylose isomerase from Haemophilus influenzae (strain PittGG).